The chain runs to 357 residues: Peptide chain release factor 1 (357 aa).

Residue Q233 is modified to N5-methylglutamine.

The protein belongs to the prokaryotic/mitochondrial release factor family. In terms of processing, methylated by PrmC. Methylation increases the termination efficiency of RF1.

Its subcellular location is the cytoplasm. In terms of biological role, peptide chain release factor 1 directs the termination of translation in response to the peptide chain termination codons UAG and UAA. The polypeptide is Peptide chain release factor 1 (Leuconostoc citreum (strain KM20)).